We begin with the raw amino-acid sequence, 181 residues long: ATP-dependent protease subunit HslV (181 aa).

Thr7 is a catalytic residue. Na(+) is bound by residues Ala165, Cys168, and Thr171.

This sequence belongs to the peptidase T1B family. HslV subfamily. In terms of assembly, a double ring-shaped homohexamer of HslV is capped on each side by a ring-shaped HslU homohexamer. The assembly of the HslU/HslV complex is dependent on binding of ATP.

It is found in the cytoplasm. It catalyses the reaction ATP-dependent cleavage of peptide bonds with broad specificity.. Allosterically activated by HslU binding. Its function is as follows. Protease subunit of a proteasome-like degradation complex believed to be a general protein degrading machinery. In Lysinibacillus sphaericus (strain C3-41), this protein is ATP-dependent protease subunit HslV.